Consider the following 416-residue polypeptide: Histidine--tRNA ligase (416 aa).

It belongs to the class-II aminoacyl-tRNA synthetase family. In terms of assembly, homodimer.

The protein localises to the cytoplasm. The enzyme catalyses tRNA(His) + L-histidine + ATP = L-histidyl-tRNA(His) + AMP + diphosphate + H(+). This Dictyoglomus thermophilum (strain ATCC 35947 / DSM 3960 / H-6-12) protein is Histidine--tRNA ligase.